Reading from the N-terminus, the 402-residue chain is Diaminopimelate decarboxylase (402 aa).

Lysine 61 is modified (N6-(pyridoxal phosphate)lysine). Residues glycine 233 and 269-272 each bind pyridoxal 5'-phosphate; that span reads EPGR. Substrate is bound by residues arginine 272, arginine 304, tyrosine 308, glutamate 334, and tyrosine 360. Tyrosine 360 contributes to the pyridoxal 5'-phosphate binding site.

Belongs to the Orn/Lys/Arg decarboxylase class-II family. LysA subfamily. In terms of assembly, homodimer. The cofactor is pyridoxal 5'-phosphate.

The catalysed reaction is meso-2,6-diaminopimelate + H(+) = L-lysine + CO2. It functions in the pathway amino-acid biosynthesis; L-lysine biosynthesis via DAP pathway; L-lysine from DL-2,6-diaminopimelate: step 1/1. In terms of biological role, specifically catalyzes the decarboxylation of meso-diaminopimelate (meso-DAP) to L-lysine. The polypeptide is Diaminopimelate decarboxylase (Thermoplasma acidophilum (strain ATCC 25905 / DSM 1728 / JCM 9062 / NBRC 15155 / AMRC-C165)).